The chain runs to 363 residues: UV excision repair protein RAD23 homolog A (363 aa).

The region spanning 1-81 is the Ubiquitin-like domain; the sequence is MAVTITLKTL…VVVMVTKTKA (81 aa). The segment at 81 to 160 is disordered; sequence AGQGTSAPPE…EDAASTLVTG (80 aa). Residues 85-103 are compositionally biased toward low complexity; that stretch reads TSAPPEASPTAAPESSTSF. Residue Lys-122 forms a Glycyl lysine isopeptide (Lys-Gly) (interchain with G-Cter in ubiquitin) linkage. 5 positions are modified to phosphoserine: Ser-123, Ser-128, Ser-133, Ser-136, and Ser-138. The segment covering 126–147 has biased composition (low complexity); it reads EESAPTTSPESVSGSVPSSGSS. In terms of domain architecture, UBA 1 spans 161 to 201; the sequence is SEYETMLTEIMSMGYERERVVAALRASYNNPHRAVEYLLTG. The segment at 203 to 227 is disordered; the sequence is PGSPEPEHGSVQESQVSEQPATEAA. Residue Ser-205 is modified to Phosphoserine. The segment covering 213 to 222 has biased composition (polar residues); the sequence is VQESQVSEQP. Phosphoserine occurs at positions 295 and 357. In terms of domain architecture, UBA 2 spans 318-358; the sequence is PQEKEAIERLKALGFPESLVIQAYFACEKNENLAANFLLSQ. Positions 319–363 are HIV-1 vpr binding; it reads QEKEAIERLKALGFPESLVIQAYFACEKNENLAANFLLSQNFDDE.

It belongs to the RAD23 family. As to quaternary structure, interacts with XPC; the interaction is suggesting the existence of a functional equivalent variant XPC complex. Interacts with PSMD4 and PSMC5. Interacts with ATXN3. Interacts with UBQLN2. (Microbial infection) Interacts with HIV-1 Vpr.

The protein resides in the nucleus. In terms of biological role, multiubiquitin chain receptor involved in modulation of proteasomal degradation. Binds to 'Lys-48'-linked polyubiquitin chains in a length-dependent manner and with a lower affinity to 'Lys-63'-linked polyubiquitin chains. Proposed to be capable to bind simultaneously to the 26S proteasome and to polyubiquitinated substrates and to deliver ubiquitinated proteins to the proteasome. Its function is as follows. Involved in nucleotide excision repair and is thought to be functional equivalent for RAD23B in global genome nucleotide excision repair (GG-NER) by association with XPC. In vitro, the XPC:RAD23A dimer has NER activity. Can stabilize XPC. (Microbial infection) Involved in Vpr-dependent replication of HIV-1 in non-proliferating cells and primary macrophages. Required for the association of HIV-1 Vpr with the host proteasome. The chain is UV excision repair protein RAD23 homolog A (RAD23A) from Homo sapiens (Human).